The sequence spans 233 residues: Cobalt-containing nitrile hydratase subunit beta (233 aa).

This sequence belongs to the nitrile hydratase subunit beta family. Heterotetramer of two alpha and two beta chains.

It catalyses the reaction an aliphatic primary amide = an aliphatic nitrile + H2O. NHase catalyzes the hydration of various nitrile compounds to the corresponding amides. This Pseudonocardia thermophila protein is Cobalt-containing nitrile hydratase subunit beta.